We begin with the raw amino-acid sequence, 66 residues long: Beta-mammal toxin Co1 (66 aa).

An LCN-type CS-alpha/beta domain is found at 1–66; the sequence is KEGYLVNHST…VWPLPKKTCN (66 aa). Cystine bridges form between Cys-12–Cys-65, Cys-16–Cys-41, Cys-25–Cys-46, and Cys-29–Cys-48.

Expressed by the venom gland.

It is found in the secreted. Its function is as follows. Beta toxins bind voltage-independently at site-4 of sodium channels (Nav) and shift the voltage of activation toward more negative potentials thereby affecting sodium channel activation and promoting spontaneous and repetitive firing. This toxin acts on human Nav1.6/SCN8A voltage-gated sodium channels. In vivo, is lethal to mice 40 minutes after intraperitoneal injection at a dose of 5ug. No activity is observed when injected into crickets or woodlice. This chain is Beta-mammal toxin Co1, found in Centruroides ornatus (Scorpion).